A 229-amino-acid chain; its full sequence is NAD(P)H-quinone oxidoreductase subunit K, chloroplastic (229 aa).

[4Fe-4S] cluster contacts are provided by cysteine 43, cysteine 44, cysteine 108, and cysteine 139.

It belongs to the complex I 20 kDa subunit family. NDH is composed of at least 16 different subunits, 5 of which are encoded in the nucleus. Requires [4Fe-4S] cluster as cofactor.

It is found in the plastid. The protein resides in the chloroplast thylakoid membrane. It carries out the reaction a plastoquinone + NADH + (n+1) H(+)(in) = a plastoquinol + NAD(+) + n H(+)(out). The catalysed reaction is a plastoquinone + NADPH + (n+1) H(+)(in) = a plastoquinol + NADP(+) + n H(+)(out). In terms of biological role, NDH shuttles electrons from NAD(P)H:plastoquinone, via FMN and iron-sulfur (Fe-S) centers, to quinones in the photosynthetic chain and possibly in a chloroplast respiratory chain. The immediate electron acceptor for the enzyme in this species is believed to be plastoquinone. Couples the redox reaction to proton translocation, and thus conserves the redox energy in a proton gradient. The protein is NAD(P)H-quinone oxidoreductase subunit K, chloroplastic of Aethionema cordifolium (Lebanon stonecress).